We begin with the raw amino-acid sequence, 360 residues long: Peptide chain release factor 1 (360 aa).

An N5-methylglutamine modification is found at glutamine 235. Basic and acidic residues predominate over residues 291 to 308; sequence ASERRNLLGTGDRSDRNR. A disordered region spans residues 291-312; sequence ASERRNLLGTGDRSDRNRTYNF.

This sequence belongs to the prokaryotic/mitochondrial release factor family. In terms of processing, methylated by PrmC. Methylation increases the termination efficiency of RF1.

The protein localises to the cytoplasm. In terms of biological role, peptide chain release factor 1 directs the termination of translation in response to the peptide chain termination codons UAG and UAA. This chain is Peptide chain release factor 1, found in Yersinia pseudotuberculosis serotype I (strain IP32953).